The primary structure comprises 1106 residues: Translation initiation factor IF-2 (1106 aa).

2 stretches are compositionally biased toward low complexity: residues 57–72 (GKAA…PDAG) and 81–97 (APST…SAPP). Disordered regions lie at residues 57-434 (GKAA…QKVH) and 466-497 (PSKP…RQRR). Composition is skewed to pro residues over residues 113 to 123 (PAKPAPSAPPS) and 138 to 148 (PAKPAPSAPPS). The span at 172–199 (AKPVAKPASAPAPARPAQPLRPQASNRP) shows a compositional bias: low complexity. Composition is skewed to pro residues over residues 200 to 214 (PQQP…PAAK) and 223 to 235 (TAPP…PGAP). 3 stretches are compositionally biased toward low complexity: residues 251–292 (PNQQ…QQRR), 319–329 (PQGRQGGAPSR), and 395–405 (YRPAAAPGMAG). Basic and acidic residues predominate over residues 408-422 (RRPDWDDSARLDALR). Over residues 482–497 (ALRRRKKETTRQRQRR) the composition is skewed to basic residues. Positions 598–771 (RRPPVVTVMG…LLVTEVEDLK (174 aa)) constitute a tr-type G domain. The tract at residues 607 to 614 (GHVDHGKT) is G1. 607–614 (GHVDHGKT) contributes to the GTP binding site. Residues 632 to 636 (GITQH) form a G2 region. The tract at residues 657 to 660 (DTPG) is G3. GTP is bound by residues 657-661 (DTPGH) and 711-714 (NKVD). Positions 711-714 (NKVD) are G4. Residues 747 to 749 (SAL) are G5.

This sequence belongs to the TRAFAC class translation factor GTPase superfamily. Classic translation factor GTPase family. IF-2 subfamily.

It localises to the cytoplasm. One of the essential components for the initiation of protein synthesis. Protects formylmethionyl-tRNA from spontaneous hydrolysis and promotes its binding to the 30S ribosomal subunits. Also involved in the hydrolysis of GTP during the formation of the 70S ribosomal complex. In Synechococcus sp. (strain RCC307), this protein is Translation initiation factor IF-2.